A 971-amino-acid chain; its full sequence is Isoleucine--tRNA ligase (971 aa).

Positions 60-70 (PYANGDLHIGH) match the 'HIGH' region motif. Glutamate 563 serves as a coordination point for L-isoleucyl-5'-AMP. Positions 604–608 (KMSKS) match the 'KMSKS' region motif. Lysine 607 contributes to the ATP binding site. The Zn(2+) site is built by cysteine 922, cysteine 925, cysteine 942, and cysteine 945.

The protein belongs to the class-I aminoacyl-tRNA synthetase family. IleS type 1 subfamily. Monomer. It depends on Zn(2+) as a cofactor.

The protein localises to the cytoplasm. The enzyme catalyses tRNA(Ile) + L-isoleucine + ATP = L-isoleucyl-tRNA(Ile) + AMP + diphosphate. Catalyzes the attachment of isoleucine to tRNA(Ile). As IleRS can inadvertently accommodate and process structurally similar amino acids such as valine, to avoid such errors it has two additional distinct tRNA(Ile)-dependent editing activities. One activity is designated as 'pretransfer' editing and involves the hydrolysis of activated Val-AMP. The other activity is designated 'posttransfer' editing and involves deacylation of mischarged Val-tRNA(Ile). This is Isoleucine--tRNA ligase from Acaryochloris marina (strain MBIC 11017).